The chain runs to 449 residues: Bifunctional F420 biosynthesis protein FbiB (449 aa).

The segment at 1–245 (MSPAGEHGTA…PGTEDLFWLG (245 aa)) is coenzyme F420:L-glutamate ligase. Residues 21–24 (LPEF), Ser-51, and Lys-56 each bind GTP. Asp-110 contributes to the a divalent metal cation binding site. Asn-113 provides a ligand contact to GTP. Asp-151 and Thr-152 together coordinate a divalent metal cation. Residues 246–449 (TAEAIELGRR…ADPGDLLIRK (204 aa)) are dehydro-coenzyme F420-0 reductase. Residues 261-265 (RRSVR) and Ala-289 each bind FMN. Position 321 (Asp-321) interacts with coenzyme F420-(gamma-Glu)n. Gly-400 and Arg-437 together coordinate FMN.

In the N-terminal section; belongs to the CofE family. Mg(2+) serves as cofactor. The cofactor is Mn(2+). K(+) is required as a cofactor.

The enzyme catalyses oxidized coenzyme F420-0 + GTP + L-glutamate = oxidized coenzyme F420-1 + GDP + phosphate + H(+). It carries out the reaction oxidized coenzyme F420-1 + GTP + L-glutamate = oxidized coenzyme F420-2 + GDP + phosphate + H(+). The catalysed reaction is oxidized coenzyme F420-(gamma-L-Glu)(n) + GTP + L-glutamate = oxidized coenzyme F420-(gamma-L-Glu)(n+1) + GDP + phosphate + H(+). It catalyses the reaction oxidized coenzyme F420-0 + FMN + H(+) = dehydro coenzyme F420-0 + FMNH2. It participates in cofactor biosynthesis; coenzyme F420 biosynthesis. Functionally, bifunctional enzyme that catalyzes the GTP-dependent successive addition of multiple gamma-linked L-glutamates to the L-lactyl phosphodiester of 7,8-didemethyl-8-hydroxy-5-deazariboflavin (F420-0) to form polyglutamated F420 derivatives, and the FMNH2-dependent reduction of dehydro-F420-0 to form F420-0. The polypeptide is Bifunctional F420 biosynthesis protein FbiB (Mycobacterium avium (strain 104)).